Here is a 304-residue protein sequence, read N- to C-terminus: Glutaminase (304 aa).

Positions 63, 114, 158, 165, 189, 240, and 258 each coordinate substrate.

It belongs to the glutaminase family. In terms of assembly, homotetramer.

It catalyses the reaction L-glutamine + H2O = L-glutamate + NH4(+). This Shewanella baltica (strain OS185) protein is Glutaminase.